The sequence spans 215 residues: uncharacterized protein (215 aa).

Belongs to the HAD-like hydrolase superfamily. CbbY/CbbZ/Gph/YieH family.

This is an uncharacterized protein from Lacticaseibacillus casei (Lactobacillus casei).